The following is a 451-amino-acid chain: Endosomal transmembrane epsin interactor 1 (451 aa).

Positions 1 to 29 (MILLVNLFVLLSVVCILLNLAGFILGCQG) are cleaved as a signal peptide. The Lumenal segment spans residues 30-85 (AQFVSSVPRCDLVDLGEGKICFCCEEFQPAKCTDKENALKLFPVQPCSAVHLLLKK). The chain crosses the membrane as a helical span at residues 86 to 106 (VLFALCALNALTTTVCLVAAA). Topologically, residues 107–451 (LRYLQIFASR…LIGVIRETVL (345 aa)) are cytoplasmic. The mediates interaction with EPN1 stretch occupies residues 107–451 (LRYLQIFASR…LIGVIRETVL (345 aa)). 2 short sequence motifs (PPxY; mediates interaction with ITCH) span residues 148–151 (PPSY) and 194–197 (PPPY). Polar residues predominate over residues 204-213 (TDQEQESSFQ). Positions 204–224 (TDQEQESSFQMPEGPETAASP) are disordered. Lys274 is covalently cross-linked (Glycyl lysine isopeptide (Lys-Gly) (interchain with G-Cter in ubiquitin)). Phosphoserine is present on Ser275. Lys365 is covalently cross-linked (Glycyl lysine isopeptide (Lys-Gly) (interchain with G-Cter in ubiquitin)).

The protein belongs to the ENTREP family. As to quaternary structure, interacts with ITCH; enhances the ubiquitination of CXCR4 by ITCH and the subsequent endocytosis and desensitization of the receptor. Interacts with EPN1.

The protein resides in the early endosome membrane. Its subcellular location is the late endosome membrane. It is found in the recycling endosome membrane. The protein localises to the cell membrane. In terms of biological role, functions as an activator of the E3 ubiquitin protein ligase ITCH in the ubiquitination of the CXCL12-activated CXCR4 receptor. Thereby, triggers CXCR4 endocytosis and desensitization, negatively regulating the CXCL12/CXCR4 signaling pathway. The chain is Endosomal transmembrane epsin interactor 1 from Mus musculus (Mouse).